The sequence spans 804 residues: Phenylalanine--tRNA ligase beta subunit (804 aa).

Residues 38–148 form the tRNA-binding domain; the sequence is RSSLKGFVIA…EDAPIGGLFA (111 aa). The B5 domain maps to 401-476; sequence PEIKQIAFPF…RIYGLDKIEP (76 aa). Mg(2+) is bound by residues Asp454, Asp460, Glu463, and Glu464. One can recognise an FDX-ACB domain in the interval 710–803; sequence SPFQMVRRDF…VTKATGAYLR (94 aa).

Belongs to the phenylalanyl-tRNA synthetase beta subunit family. Type 1 subfamily. As to quaternary structure, tetramer of two alpha and two beta subunits. Mg(2+) serves as cofactor.

It is found in the cytoplasm. The catalysed reaction is tRNA(Phe) + L-phenylalanine + ATP = L-phenylalanyl-tRNA(Phe) + AMP + diphosphate + H(+). The chain is Phenylalanine--tRNA ligase beta subunit from Bartonella quintana (strain Toulouse) (Rochalimaea quintana).